Reading from the N-terminus, the 250-residue chain is Acetoacetate decarboxylase 1 (250 aa).

Residue K120 is the Schiff-base intermediate with acetoacetate of the active site.

Belongs to the ADC family.

It catalyses the reaction acetoacetate + H(+) = acetone + CO2. Its function is as follows. Catalyzes the conversion of acetoacetate to acetone and carbon dioxide. The sequence is that of Acetoacetate decarboxylase 1 from Bradyrhizobium diazoefficiens (strain JCM 10833 / BCRC 13528 / IAM 13628 / NBRC 14792 / USDA 110).